Reading from the N-terminus, the 276-residue chain is MGTSIVNLNQKIELPPIQVLFESLNRENETKPHFEERRLYQPNPSFVPRTNIAVGSPVNPVPVSSPVFFIGPSPQRSIQNHNAIMTQNIRQYPVIYNNNREVISTGERNYIITVGGPPVTSSQPEYEHISTPNFYQEQRLAQPHPVNESMMIGGYTNPQPISISRGKMLSGNISTNSVRGSNNGYSAKEKKHKAHGKRSNLPKATVSILNKWLHEHVNNPYPTVQEKRELLAKTGLTKLQISNWFINARRRKIFSGQNDANNFRRKFSSSTNLAKF.

Polar residues predominate over residues 176-185 (NSVRGSNNGY). The segment at 176–199 (NSVRGSNNGYSAKEKKHKAHGKRS) is disordered. Basic residues predominate over residues 189-199 (EKKHKAHGKRS). The homeobox; TALE-type DNA-binding region spans 194–256 (AHGKRSNLPK…NARRRKIFSG (63 aa)).

It belongs to the TALE/CUP9 homeobox family.

The protein localises to the nucleus. In Saccharomyces cerevisiae (strain ATCC 204508 / S288c) (Baker's yeast), this protein is Homeobox protein TOS8 (TOS8).